A 930-amino-acid chain; its full sequence is RNA-binding protein 10 (930 aa).

2 stretches are compositionally biased toward basic and acidic residues: residues M1–G14 and R21–P45. The segment at M1–A127 is disordered. Position 2 is an N-acetylserine (E2). 3 positions are modified to phosphoserine: R30, S61, and S89. Residues D59–Y70 show a composition bias toward acidic residues. Residues R80–S89 are compositionally biased toward basic residues. A compositionally biased stretch (basic and acidic residues) spans R98–Q111. A compositionally biased stretch (acidic residues) spans G112–E125. An RRM 1 domain is found at N129–P209. The RanBP2-type zinc finger occupies K212–E242. Residues D300–G384 enclose the RRM 2 domain. K383 bears the N6-acetyllysine mark. 4 disordered regions span residues P466 to S524, S537 to V569, E620 to R685, and K700 to L753. Positions Y508–S524 are enriched in polar residues. A compositionally biased stretch (low complexity) spans S541–A557. Basic and acidic residues-rich tracts occupy residues A623–K639, K653–F669, and K700–T709. 5 positions are modified to phosphoserine: S718, S723, S733, S736, and S738. Positions E743 to L753 are enriched in basic and acidic residues. The C2H2-type; atypical zinc finger occupies L759–H784. A phosphoserine mark is found at S781 and S797. The segment covering R815–G826 has biased composition (basic and acidic residues). The segment at R815–I861 is disordered. S845 carries the post-translational modification Phosphoserine. The 47-residue stretch at S858–S904 folds into the G-patch domain. R902 carries the omega-N-methylarginine modification.

As to quaternary structure, associates with the spliceosome. Component of a large chromatin remodeling complex, at least composed of MYSM1, PCAF, RBM10 and KIF11/TRIP5.

The protein resides in the nucleus. Binds to ssRNA containing the consensus sequence 5'-AGGUAA-3'. May be involved in post-transcriptional processing, most probably in mRNA splicing. Binds to RNA homopolymers, with a preference for poly(G) and poly(U) and little for poly(A). May bind to specific miRNA hairpins. The protein is RNA-binding protein 10 of Homo sapiens (Human).